Reading from the N-terminus, the 156-residue chain is Small ribosomal subunit protein uS7 (156 aa).

Belongs to the universal ribosomal protein uS7 family. In terms of assembly, part of the 30S ribosomal subunit. Contacts proteins S9 and S11.

One of the primary rRNA binding proteins, it binds directly to 16S rRNA where it nucleates assembly of the head domain of the 30S subunit. Is located at the subunit interface close to the decoding center, probably blocks exit of the E-site tRNA. The polypeptide is Small ribosomal subunit protein uS7 (Synechococcus sp. (strain CC9311)).